The following is a 258-amino-acid chain: Large ribosomal subunit protein bL19m (258 aa).

Residues 235–258 (SKGLTGGVGGGGGKQKGQESKKKN) are disordered. A compositionally biased stretch (gly residues) spans 238-249 (LTGGVGGGGGKQ).

This sequence belongs to the bacterial ribosomal protein bL19 family. As to quaternary structure, component of the mitochondrial large ribosomal subunit (mt-LSU). Mature N.crassa 74S mitochondrial ribosomes consist of a small (37S) and a large (54S) subunit. The 37S small subunit contains a 16S ribosomal RNA (16S mt-rRNA) and 32 different proteins. The 54S large subunit contains a 23S rRNA (23S mt-rRNA) and 42 different proteins.

It localises to the mitochondrion. In terms of biological role, component of the mitochondrial ribosome (mitoribosome), a dedicated translation machinery responsible for the synthesis of mitochondrial genome-encoded proteins, including at least some of the essential transmembrane subunits of the mitochondrial respiratory chain. The mitoribosomes are attached to the mitochondrial inner membrane and translation products are cotranslationally integrated into the membrane. This chain is Large ribosomal subunit protein bL19m (img1), found in Neurospora crassa (strain ATCC 24698 / 74-OR23-1A / CBS 708.71 / DSM 1257 / FGSC 987).